A 270-amino-acid chain; its full sequence is Oxidoreductase claK (270 aa).

It belongs to the avfA family.

It participates in pigment biosynthesis. In terms of biological role, oxidoreductase; part of the gene cluster that mediates the biosynthesis of the bianthraquinone cladofulvin, a conidial pigment not required for virulence but that plays a role in fitness and resistance to environmental stresses including UV light and low-temperature stress. The pathway begins with the synthesis of atrochrysone thioester by the polyketide synthase (PKS) claG. The atrochrysone carboxyl ACP thioesterase claF then breaks the thioester bond and releases the atrochrysone carboxylic acid from claG. This compound is decarboxylated by claH to yield emodin, which is further converted to chrysophanol hydroquinone by the reductase claC and the dehydratase claB. The cytochrome monooxygenase P450 claM then catalyzes the dimerization of nataloe-emodin to cladofulvin. This chain is Oxidoreductase claK, found in Passalora fulva (Tomato leaf mold).